The chain runs to 263 residues: Undecaprenyl-diphosphatase 2 (263 aa).

8 helical membrane-spanning segments follow: residues 15–37 (GLTE…LIGF), 42–62 (AKVF…VIFW), 79–99 (SLNL…GVLF), 107–127 (LFGP…MIVA), 142–162 (ITYK…WPGF), 183–203 (AEYT…LDLI), 216–236 (LFVT…VSFL), and 242–262 (VKLT…YFFI).

This sequence belongs to the UppP family.

The protein localises to the cell membrane. It catalyses the reaction di-trans,octa-cis-undecaprenyl diphosphate + H2O = di-trans,octa-cis-undecaprenyl phosphate + phosphate + H(+). Its function is as follows. Catalyzes the dephosphorylation of undecaprenyl diphosphate (UPP). Confers resistance to bacitracin. The sequence is that of Undecaprenyl-diphosphatase 2 from Bacillus cereus (strain ATCC 14579 / DSM 31 / CCUG 7414 / JCM 2152 / NBRC 15305 / NCIMB 9373 / NCTC 2599 / NRRL B-3711).